The sequence spans 1244 residues: ATP-dependent helicase/nuclease subunit A (1244 aa).

Residues 4-475 (KKWTAEQLAA…IGLSKNFRSR (472 aa)) enclose the UvrD-like helicase ATP-binding domain. 25–32 (AAAGAGKT) is an ATP binding site. Residues 515–816 (EDVKTATGPV…RIMSIHKSKG (302 aa)) enclose the UvrD-like helicase C-terminal domain. Residues 538–559 (EQNTDSAEEKLTDGEEQEDLDS) are disordered.

The protein belongs to the helicase family. AddA subfamily. As to quaternary structure, heterodimer of AddA and AddB/RexB. Requires Mg(2+) as cofactor.

The catalysed reaction is Couples ATP hydrolysis with the unwinding of duplex DNA by translocating in the 3'-5' direction.. It catalyses the reaction ATP + H2O = ADP + phosphate + H(+). In terms of biological role, the heterodimer acts as both an ATP-dependent DNA helicase and an ATP-dependent, dual-direction single-stranded exonuclease. Recognizes the chi site generating a DNA molecule suitable for the initiation of homologous recombination. The AddA nuclease domain is required for chi fragment generation; this subunit has the helicase and 3' -&gt; 5' nuclease activities. This chain is ATP-dependent helicase/nuclease subunit A, found in Desulforamulus reducens (strain ATCC BAA-1160 / DSM 100696 / MI-1) (Desulfotomaculum reducens).